A 139-amino-acid polypeptide reads, in one-letter code: 6,7-dimethyl-8-ribityllumazine synthase (139 aa).

5-amino-6-(D-ribitylamino)uracil-binding positions include Phe-13, 45–47 (VFD), and 69–71 (AVI). 74-75 (AT) is a (2S)-2-hydroxy-3-oxobutyl phosphate binding site. His-77 acts as the Proton donor in catalysis. Leu-102 contributes to the 5-amino-6-(D-ribitylamino)uracil binding site. Arg-117 is a binding site for (2S)-2-hydroxy-3-oxobutyl phosphate.

This sequence belongs to the DMRL synthase family.

It carries out the reaction (2S)-2-hydroxy-3-oxobutyl phosphate + 5-amino-6-(D-ribitylamino)uracil = 6,7-dimethyl-8-(1-D-ribityl)lumazine + phosphate + 2 H2O + H(+). It participates in cofactor biosynthesis; riboflavin biosynthesis; riboflavin from 2-hydroxy-3-oxobutyl phosphate and 5-amino-6-(D-ribitylamino)uracil: step 1/2. Functionally, catalyzes the formation of 6,7-dimethyl-8-ribityllumazine by condensation of 5-amino-6-(D-ribitylamino)uracil with 3,4-dihydroxy-2-butanone 4-phosphate. This is the penultimate step in the biosynthesis of riboflavin. The chain is 6,7-dimethyl-8-ribityllumazine synthase from Methanothermobacter thermautotrophicus (strain ATCC 29096 / DSM 1053 / JCM 10044 / NBRC 100330 / Delta H) (Methanobacterium thermoautotrophicum).